The primary structure comprises 326 residues: Zona pellucida-binding protein 2 (326 aa).

An N-terminal signal peptide occupies residues 1 to 19 (MLAWALLYAVLWSLAGVGS). Asn-86, Asn-220, and Asn-256 each carry an N-linked (GlcNAc...) asparagine glycan.

It belongs to the zona pellucida-binding protein Sp38 family. N-glycosylated. Expressed specifically in male germ cells.

The protein resides in the cytoplasmic vesicle. It is found in the secretory vesicle. The protein localises to the acrosome. It localises to the secreted. Is implicated in sperm-oocyte interaction during fertilization. This is Zona pellucida-binding protein 2 (Zpbp2) from Mus musculus (Mouse).